The chain runs to 266 residues: Ankyrin repeat domain-containing protein 45 (266 aa).

Composition is skewed to acidic residues over residues 1–11 (MESEGPPESES) and 18–32 (QEEE…EPEE). Residues 1 to 43 (MESEGPPESESSEFFSQQEEENEEEEAQEPEETGPKNPLLQPA) form a disordered region. ANK repeat units lie at residues 76-105 (VGRN…NLNE) and 109-138 (RGYT…DIEA).

It is found in the cytoplasm. It localises to the midbody. The protein resides in the midbody ring. The protein localises to the cleavage furrow. May play a role during cell division. In Homo sapiens (Human), this protein is Ankyrin repeat domain-containing protein 45.